Here is a 181-residue protein sequence, read N- to C-terminus: Inner membrane-spanning protein YciB (181 aa).

A run of 5 helical transmembrane segments spans residues 10-30 (LVIFFAVYKFFDIYIASGALI), 50-70 (MHLITFVMVTVFGSLTLILHD), 72-92 (SFIKWKVTIVYALFAIALGVS), 118-138 (VTWYWVSFFVVCGLVNIYVAF), and 148-168 (FKVFGLTALTLINTVLTVVYL).

Belongs to the YciB family.

Its subcellular location is the cell inner membrane. In terms of biological role, plays a role in cell envelope biogenesis, maintenance of cell envelope integrity and membrane homeostasis. The polypeptide is Inner membrane-spanning protein YciB (Shewanella pealeana (strain ATCC 700345 / ANG-SQ1)).